The sequence spans 242 residues: 2-C-methyl-D-erythritol 4-phosphate cytidylyltransferase (242 aa).

Belongs to the IspD/TarI cytidylyltransferase family. IspD subfamily.

It catalyses the reaction 2-C-methyl-D-erythritol 4-phosphate + CTP + H(+) = 4-CDP-2-C-methyl-D-erythritol + diphosphate. Its pathway is isoprenoid biosynthesis; isopentenyl diphosphate biosynthesis via DXP pathway; isopentenyl diphosphate from 1-deoxy-D-xylulose 5-phosphate: step 2/6. Its function is as follows. Catalyzes the formation of 4-diphosphocytidyl-2-C-methyl-D-erythritol from CTP and 2-C-methyl-D-erythritol 4-phosphate (MEP). This chain is 2-C-methyl-D-erythritol 4-phosphate cytidylyltransferase, found in Halorhodospira halophila (strain DSM 244 / SL1) (Ectothiorhodospira halophila (strain DSM 244 / SL1)).